The primary structure comprises 1138 residues: Phosphatidylserine decarboxylase proenzyme 2 (1138 aa).

A C2 1 domain is found at 1–122 (MRIIKGRKRG…SNSGLSSHSH (122 aa)). 3 disordered regions span residues 90 to 166 (TGAP…PGST), 269 to 305 (MRSS…DTDL), and 413 to 448 (AVSE…REDS). Positions 98 to 121 (SRPRTTTANTSSSTLSNSGLSSHS) are enriched in low complexity. Residues 125 to 135 (RNLNVTSKGNQ) are compositionally biased toward polar residues. Positions 136-166 (TSTSINSVSSSATPAPSHSSSSLSTTGPGST) are enriched in low complexity. Residues 293 to 305 (EIRREKPYSDTDL) show a composition bias toward basic and acidic residues. A compositionally biased stretch (acidic residues) spans 421 to 448 (SVDDEESENQQESDEEFDIYNEDEREDS). In terms of domain architecture, C2 2 spans 478–600 (RRAKSNFFIS…QQQQHENEWI (123 aa)). 3 residues coordinate Ca(2+): aspartate 571, serine 574, and aspartate 577. Catalysis depends on charge relay system; for autoendoproteolytic cleavage activity residues aspartate 899, histidine 956, and serine 1043. Serine 1043 acts as the Schiff-base intermediate with substrate; via pyruvic acid; for decarboxylase activity in catalysis. Pyruvic acid (Ser); by autocatalysis is present on serine 1043.

It belongs to the phosphatidylserine decarboxylase family. PSD-B subfamily. Eukaryotic type II sub-subfamily. In terms of assembly, heterodimer of a large membrane-associated beta subunit and a small pyruvoyl-containing alpha subunit. Interacts with pstB2/PDR17. This interaction may be a means to structurally tether the donor membrane (ER) harboring PstB2/PDR17 to acceptor membranes (Golgi/endosomes) harboring PSD2 during PtdSer transport to the site of PtdEtn synthesis. Requires pyruvate as cofactor. Ca(2+) is required as a cofactor. Is synthesized initially as an inactive proenzyme. Formation of the active enzyme involves a self-maturation process in which the active site pyruvoyl group is generated from an internal serine residue via an autocatalytic post-translational modification. Two non-identical subunits are generated from the proenzyme in this reaction, and the pyruvate is formed at the N-terminus of the alpha chain, which is derived from the carboxyl end of the proenzyme. The autoendoproteolytic cleavage occurs by a canonical serine protease mechanism, in which the side chain hydroxyl group of the serine supplies its oxygen atom to form the C-terminus of the beta chain, while the remainder of the serine residue undergoes an oxidative deamination to produce ammonia and the pyruvoyl prosthetic group on the alpha chain. During this reaction, the Ser that is part of the protease active site of the proenzyme becomes the pyruvoyl prosthetic group, which constitutes an essential element of the active site of the mature decarboxylase.

It is found in the golgi apparatus membrane. The protein resides in the endosome membrane. It catalyses the reaction a 1,2-diacyl-sn-glycero-3-phospho-L-serine + H(+) = a 1,2-diacyl-sn-glycero-3-phosphoethanolamine + CO2. The protein operates within phospholipid metabolism; phosphatidylethanolamine biosynthesis; phosphatidylethanolamine from CDP-diacylglycerol: step 2/2. Its function is as follows. Catalyzes the formation of phosphatidylethanolamine (PtdEtn) from phosphatidylserine (PtdSer). Plays a central role in phospholipid metabolism and in the interorganelle trafficking of phosphatidylserine. Phosphatidylethanolamine produced by PSD2 is insufficient to completely provide the PtdEtn pool required by mitochondria under respiratory conditions. PSD2 is also involved in the PtdSer transport step to the site of PtdEtn synthesis on the Golgi/endosome membranes. Required for normal heavy metal resistance. The sequence is that of Phosphatidylserine decarboxylase proenzyme 2 from Saccharomyces cerevisiae (strain ATCC 204508 / S288c) (Baker's yeast).